The primary structure comprises 127 residues: Protein translocase subunit SecE (127 aa).

3 helical membrane-spanning segments follow: residues 16 to 36 (AMKW…NYLY), 41 to 61 (LPLR…VALL), and 96 to 116 (IVAA…GILV).

Belongs to the SecE/SEC61-gamma family. In terms of assembly, component of the Sec protein translocase complex. Heterotrimer consisting of SecY, SecE and SecG subunits. The heterotrimers can form oligomers, although 1 heterotrimer is thought to be able to translocate proteins. Interacts with the ribosome. Interacts with SecDF, and other proteins may be involved. Interacts with SecA.

Its subcellular location is the cell inner membrane. Its function is as follows. Essential subunit of the Sec protein translocation channel SecYEG. Clamps together the 2 halves of SecY. May contact the channel plug during translocation. This chain is Protein translocase subunit SecE, found in Salmonella typhi.